The primary structure comprises 301 residues: L-threonate dehydrogenase (301 aa).

Residues 6–34 (YSVAVIGLGSMGMGAAVSCINAGLTTYGI) and Thr-101 each bind NAD(+). Lys-177 is a catalytic residue. Position 245 (Lys-245) interacts with NAD(+).

The protein belongs to the HIBADH-related family. L-threonate dehydrogenase subfamily.

It carries out the reaction L-threonate + NAD(+) = 2-dehydro-L-erythronate + NADH + H(+). In terms of biological role, catalyzes oxidation of L-threonate to 2-oxo-tetronate. Can use either NAD(+) or NADP(+) as cosubstrate, with a preference for NAD(+). The protein is L-threonate dehydrogenase of Haemophilus influenzae (strain ATCC 51907 / DSM 11121 / KW20 / Rd).